Reading from the N-terminus, the 196-residue chain is Imidazole glycerol phosphate synthase subunit HisH (196 aa).

The Glutamine amidotransferase type-1 domain occupies 2 to 196 (KVAVIKYNAG…ERIIKNFLEL (195 aa)). Catalysis depends on C77, which acts as the Nucleophile. Catalysis depends on residues H178 and E180.

As to quaternary structure, heterodimer of HisH and HisF.

It is found in the cytoplasm. The catalysed reaction is 5-[(5-phospho-1-deoxy-D-ribulos-1-ylimino)methylamino]-1-(5-phospho-beta-D-ribosyl)imidazole-4-carboxamide + L-glutamine = D-erythro-1-(imidazol-4-yl)glycerol 3-phosphate + 5-amino-1-(5-phospho-beta-D-ribosyl)imidazole-4-carboxamide + L-glutamate + H(+). The enzyme catalyses L-glutamine + H2O = L-glutamate + NH4(+). It participates in amino-acid biosynthesis; L-histidine biosynthesis; L-histidine from 5-phospho-alpha-D-ribose 1-diphosphate: step 5/9. Functionally, IGPS catalyzes the conversion of PRFAR and glutamine to IGP, AICAR and glutamate. The HisH subunit catalyzes the hydrolysis of glutamine to glutamate and ammonia as part of the synthesis of IGP and AICAR. The resulting ammonia molecule is channeled to the active site of HisF. The sequence is that of Imidazole glycerol phosphate synthase subunit HisH from Bacteroides fragilis (strain ATCC 25285 / DSM 2151 / CCUG 4856 / JCM 11019 / LMG 10263 / NCTC 9343 / Onslow / VPI 2553 / EN-2).